A 218-amino-acid chain; its full sequence is Alkylmercury lyase (218 aa).

Belongs to the MerB family.

The enzyme catalyses an alkylmercury + H(+) = an alkane + Hg(2+). Functionally, cleaves the carbon-mercury bond of organomercurials such as phenylmercuric acetate. One product is Hg(2+), which is subsequently detoxified by the mercuric reductase. In Bacillus cereus, this protein is Alkylmercury lyase (merB1).